We begin with the raw amino-acid sequence, 379 residues long: Gonadotropin-releasing hormone II receptor (379 aa).

The Extracellular segment spans residues 1–40 (MSAGNGTPWGSAVGEEAWAGSGVAVEGSELPTFSTAAKVR). Residues 41–60 (VGVTIVLFVSSAGGNLAVLW) traverse the membrane as a helical segment. At 61-76 (SVTRPQPSQLRPSPVR) the chain is on the cytoplasmic side. A helical transmembrane segment spans residues 77-96 (TLFAHLAAADLLVTFVVMPL). The Extracellular segment spans residues 97–114 (DATWNITVQWLAGDIACR). An N-linked (GlcNAc...) asparagine glycan is attached at asparagine 101. Cysteine 113 and cysteine 188 are joined by a disulfide. A helical membrane pass occupies residues 115–136 (TLMFLKLMAMYSAAFLPVVIGL). Residues 137–160 (DRQAAVLNPLGSRSGVRKLLGAAW) lie on the Cytoplasmic side of the membrane. A helical transmembrane segment spans residues 161 to 178 (GLSFLLALPQLFLFHTVH). Residues 179–204 (RAGPVPFTQCVTKGSFKARWQETTYN) lie on the Extracellular side of the membrane. A helical membrane pass occupies residues 205 to 224 (LFTFCCLFLLPLIAMAICYS). The Cytoplasmic segment spans residues 225-278 (RIVLSVSSPQTRKGSHAPAGEFALRRSFDNRPRVCLRALRLALLILLTFILCWT). The helical transmembrane segment at 279-297 (PYYLLGLWYWFSPTMLTEV) threads the bilayer. Residues 298 to 303 (PPSLSH) are Extracellular-facing. A helical transmembrane segment spans residues 304-323 (ILFLFGLLNAPLDPLLYGAF). At 324–379 (TFGCRRGHQELSIDSSKEGSGRMLQQEIHALRQQEVQKTVTSRSAGETKGISITSI) the chain is on the cytoplasmic side.

This sequence belongs to the G-protein coupled receptor 1 family. Post-translationally, phosphorylated on the C-terminal cytoplasmic tail.

The protein localises to the cell membrane. Functionally, receptor for gonadotropin releasing hormone II (GnRH II). This receptor mediates its action by association with G proteins that activate a phosphatidylinositol-calcium second messenger system. This Chlorocebus aethiops (Green monkey) protein is Gonadotropin-releasing hormone II receptor (GNRHR2).